A 239-amino-acid chain; its full sequence is MNIDIVISADHIDEKRLINKTVIIIDILRATSVITTAINNGCKKVIPVLTVEEAKDIAKNSKEDIILGGERNALKIDGFNFSNSPLEYTKKYVEGKTVVLSTTNGTRAINNSFNAKTILISALINSKATAKAIDKLNEELIIINSGTNGQFSIDDFICSGYLIDCLYNIRKDLELSDIAKTAHYIYTNNKDIESFVKKATHYSRLKSLNLEKDLEYCFQKDIIDVVPQYKDGYIIKSNI.

The protein belongs to the ComB family. Mg(2+) is required as a cofactor.

It carries out the reaction (2R)-O-phospho-3-sulfolactate + H2O = (2R)-3-sulfolactate + phosphate. This is Probable 2-phosphosulfolactate phosphatase from Clostridium botulinum (strain Langeland / NCTC 10281 / Type F).